Consider the following 80-residue polypeptide: N-V protease (80 aa).

Belongs to the peptidase S8 family. As to quaternary structure, monomer. Body cavity.

Its subcellular location is the secreted. With respect to regulation, inhibited by the serine protease inhibitors DFP, PMSF and TLCK. Not inhibited by the serine protease inhibitors aprotinin, elastinal, SBTI and benzamidine, the cysteine protease inhibitors iodoacetate and E64, or the metalloprotease inhibitors EDTA and EGTA. Functionally, serine protease. Hydrolyzes the alpha chains of fibrin and fibrinogen completely, has lower activity on the beta and gamma chains of fibrin and fibrinogen. In Alitta virens (Sandworm), this protein is N-V protease.